Here is a 428-residue protein sequence, read N- to C-terminus: Dihydroorotase (428 aa).

Residues H60 and H62 each contribute to the Zn(2+) site. Substrate contacts are provided by residues 62–64 and N94; that span reads HLR. The Zn(2+) site is built by D152, H179, and H232. Residue N278 coordinates substrate. Position 305 (D305) interacts with Zn(2+). D305 is a catalytic residue. H309 is a substrate binding site.

This sequence belongs to the metallo-dependent hydrolases superfamily. DHOase family. Class I DHOase subfamily. Zn(2+) is required as a cofactor.

It carries out the reaction (S)-dihydroorotate + H2O = N-carbamoyl-L-aspartate + H(+). Its pathway is pyrimidine metabolism; UMP biosynthesis via de novo pathway; (S)-dihydroorotate from bicarbonate: step 3/3. Functionally, catalyzes the reversible cyclization of carbamoyl aspartate to dihydroorotate. In Ruminiclostridium cellulolyticum (strain ATCC 35319 / DSM 5812 / JCM 6584 / H10) (Clostridium cellulolyticum), this protein is Dihydroorotase.